The following is a 225-amino-acid chain: Membrane protein (225 aa).

Residues 1-20 (MDNTTNCTLGTEQAVQLFKE) lie on the Virion surface side of the membrane. Residues 21-41 (YNLFVTAFLLFLTILLQYGYA) traverse the membrane as a helical segment. The Intravirion segment spans residues 42 to 51 (TRNKVIYILK). A helical membrane pass occupies residues 52-72 (MIVLWCFWPLNIAVGAISCIY). At 73-77 (PPNTG) the chain is on the virion surface side. Residues 78 to 98 (GLVAAIILTVFACLSFIGYWI) traverse the membrane as a helical segment. Residues 99 to 225 (QSFRLFKRCR…VATGGSSLYT (127 aa)) are Intravirion-facing.

Belongs to the gammacoronaviruses M protein family. As to quaternary structure, homomultimer. Interacts with envelope E protein in the budding compartment of the host cell, which is located between endoplasmic reticulum and the Golgi complex. Forms a complex with HE and S proteins. Interacts with nucleocapsid N protein. This interaction probably participates in RNA packaging into the virus.

It is found in the virion membrane. Its subcellular location is the host Golgi apparatus membrane. In terms of biological role, component of the viral envelope that plays a central role in virus morphogenesis and assembly via its interactions with other viral proteins. This Avian infectious bronchitis virus (strain 6/82) (IBV) protein is Membrane protein.